A 220-amino-acid chain; its full sequence is Pyridoxine/pyridoxamine 5'-phosphate oxidase (220 aa).

Substrate is bound by residues 8 to 11 (RKSY) and Lys-66. FMN contacts are provided by residues 61–66 (RVVLIK), 76–77 (FT), Arg-82, and Lys-83. The substrate site is built by Tyr-123, Arg-127, and Ser-131. FMN-binding positions include 140 to 141 (QS) and Trp-184. 190 to 192 (RLH) serves as a coordination point for substrate. Arg-194 lines the FMN pocket.

The protein belongs to the pyridoxamine 5'-phosphate oxidase family. In terms of assembly, homodimer. It depends on FMN as a cofactor.

The enzyme catalyses pyridoxamine 5'-phosphate + O2 + H2O = pyridoxal 5'-phosphate + H2O2 + NH4(+). It carries out the reaction pyridoxine 5'-phosphate + O2 = pyridoxal 5'-phosphate + H2O2. It participates in cofactor metabolism; pyridoxal 5'-phosphate salvage; pyridoxal 5'-phosphate from pyridoxamine 5'-phosphate: step 1/1. It functions in the pathway cofactor metabolism; pyridoxal 5'-phosphate salvage; pyridoxal 5'-phosphate from pyridoxine 5'-phosphate: step 1/1. Its function is as follows. Catalyzes the oxidation of either pyridoxine 5'-phosphate (PNP) or pyridoxamine 5'-phosphate (PMP) into pyridoxal 5'-phosphate (PLP). In Albidiferax ferrireducens (strain ATCC BAA-621 / DSM 15236 / T118) (Rhodoferax ferrireducens), this protein is Pyridoxine/pyridoxamine 5'-phosphate oxidase.